Reading from the N-terminus, the 35-residue chain is Beta/delta-theraphotoxin-Pre1a (35 aa).

3 disulfide bridges follow: Cys-3-Cys-18, Cys-10-Cys-23, and Cys-17-Cys-30.

The protein belongs to the neurotoxin 10 (Hwtx-1) family. As to expression, expressed by the venom gland.

The protein resides in the secreted. Functionally, gating-modifier toxin that both inhibits the peak current of human Nav1.1/SCN1A, rat Nav1.2/SCN2A, human Nav1.6/SCN8A, and human Nav1.7/SCN9A and concurrently inhibits fast inactivation of human Nav1.1 and rat Nav1.3/SCN3A. The relative rank order potency for Nav modulation is Nav1.3 (inactivation EC(50)=45 nM) &gt; Nav1.7 &gt; Nav1.2 &gt; Nav1.1 (inactivation) &gt; Nav1.1 &gt; Nav1.6 &gt; Nav1.3 (IC(50)=8 uM). The DII and DIV S3-S4 loops of Nav channel voltage sensors are important for the interaction of this toxin with Nav channels but cannot account for its unique subtype selectivity. It is the variability of the S1-S2 loops between NaV channels which contributes substantially to the selectivity profile observed for this toxin, particularly with regards to fast inactivation. This toxin may bind the channel in the resting state. The protein is Beta/delta-theraphotoxin-Pre1a of Psalmopoeus reduncus (Costa Rican orangemouth tarantula).